The primary structure comprises 88 residues: MVGEQPNIGDLVSQEEPSVLDLNCYEDIPAEEEESEYPYAIVLPCGLCDQLLRLTCVSDLSTLTRLEELLLGSLRIVCPLCAIRHQRH.

The tract at residues 1–37 (MVGEQPNIGDLVSQEEPSVLDLNCYEDIPAEEEESEY) is E7 terminal domain. The LXCXE motif; interaction with host RB1 and TMEM173/STING motif lies at 22-26 (LNCYE). The segment at 45–81 (CGLCDQLLRLTCVSDLSTLTRLEELLLGSLRIVCPLC) is a zinc-finger region. The Nuclear export signal motif lies at 63–71 (LTRLEELLL).

The protein belongs to the papillomaviridae E7 protein family. Homodimer. Homooligomer. Interacts with host RB1; this interaction induces dissociation of RB1-E2F1 complex thereby disrupting RB1 activity. Interacts with host EP300; this interaction represses EP300 transcriptional activity. Interacts with protein E2; this interaction inhibits E7 oncogenic activity. Interacts with host TMEM173/STING; this interaction impairs the ability of TMEM173/STING to sense cytosolic DNA and promote the production of type I interferon (IFN-alpha and IFN-beta). Post-translationally, highly phosphorylated.

Its subcellular location is the host cytoplasm. It localises to the host nucleus. Functionally, plays a role in viral genome replication by driving entry of quiescent cells into the cell cycle. Stimulation of progression from G1 to S phase allows the virus to efficiently use the cellular DNA replicating machinery to achieve viral genome replication. E7 protein has both transforming and trans-activating activities. Induces the disassembly of the E2F1 transcription factor from RB1, with subsequent transcriptional activation of E2F1-regulated S-phase genes. Interferes with host histone deacetylation mediated by HDAC1 and HDAC2, leading to transcription activation. Also plays a role in the inhibition of both antiviral and antiproliferative functions of host interferon alpha. Interaction with host TMEM173/STING impairs the ability of TMEM173/STING to sense cytosolic DNA and promote the production of type I interferon (IFN-alpha and IFN-beta). The protein is Protein E7 of Human papillomavirus type 63.